Consider the following 109-residue polypeptide: T cell receptor alpha variable 26-1 (109 aa).

Positions 1-19 (MRLVARVTVFLTFGTIIDA) are cleaved as a signal peptide. The Ig-like domain occupies 20-109 (KTTQPTSMDC…TAVYYCIVRV (90 aa)). Cys-39 and Cys-105 are disulfide-bonded. N-linked (GlcNAc...) asparagine glycosylation is found at Asn-40 and Asn-71.

Alpha-beta TR is a heterodimer composed of an alpha and beta chain; disulfide-linked. The alpha-beta TR is associated with the transmembrane signaling CD3 coreceptor proteins to form the TR-CD3 (TcR or TCR). The assembly of alpha-beta TR heterodimers with CD3 occurs in the endoplasmic reticulum where a single alpha-beta TR heterodimer associates with one CD3D-CD3E heterodimer, one CD3G-CD3E heterodimer and one CD247 homodimer forming a stable octameric structure. CD3D-CD3E and CD3G-CD3E heterodimers preferentially associate with TR alpha and TR beta chains, respectively. The association of the CD247 homodimer is the last step of TcR assembly in the endoplasmic reticulum and is required for transport to the cell surface.

It is found in the cell membrane. Functionally, v region of the variable domain of T cell receptor (TR) alpha chain that participates in the antigen recognition. Alpha-beta T cell receptors are antigen specific receptors which are essential to the immune response and are present on the cell surface of T lymphocytes. Recognize peptide-major histocompatibility (MH) (pMH) complexes that are displayed by antigen presenting cells (APC), a prerequisite for efficient T cell adaptive immunity against pathogens. Binding of alpha-beta TR to pMH complex initiates TR-CD3 clustering on the cell surface and intracellular activation of LCK that phosphorylates the ITAM motifs of CD3G, CD3D, CD3E and CD247 enabling the recruitment of ZAP70. In turn ZAP70 phosphorylates LAT, which recruits numerous signaling molecules to form the LAT signalosome. The LAT signalosome propagates signal branching to three major signaling pathways, the calcium, the mitogen-activated protein kinase (MAPK) kinase and the nuclear factor NF-kappa-B (NF-kB) pathways, leading to the mobilization of transcription factors that are critical for gene expression and essential for T cell growth and differentiation. The T cell repertoire is generated in the thymus, by V-(D)-J rearrangement. This repertoire is then shaped by intrathymic selection events to generate a peripheral T cell pool of self-MH restricted, non-autoaggressive T cells. Post-thymic interaction of alpha-beta TR with the pMH complexes shapes TR structural and functional avidity. In Homo sapiens (Human), this protein is T cell receptor alpha variable 26-1.